The chain runs to 183 residues: Mast cell-expressed membrane protein 1 (183 aa).

A disordered region spans residues 1–26; the sequence is MHASASQDKNRRKPGHDEGAHNPDYE. At 1 to 70 the chain is on the cytoplasmic side; the sequence is MHASASQDKN…PPWLYRTIMM (70 aa). Positions 15–24 are enriched in basic and acidic residues; the sequence is GHDEGAHNPD. A helical; Signal-anchor for type II membrane protein transmembrane segment spans residues 71 to 91; it reads LYVLLALVFLSCIVLSALVLV. Topologically, residues 92–183 are extracellular; it reads KNSEMSKELW…EKKAQPQPST (92 aa). An N-linked (GlcNAc...) asparagine glycan is attached at Asn-109.

It localises to the membrane. The polypeptide is Mast cell-expressed membrane protein 1 (Mus musculus (Mouse)).